The chain runs to 407 residues: MQMDSPKSPLQPPTYGNLVTILSIDGGGIRGLIPAVILGFLESELQKLDGEEARLADYFDVIAGTSTGGLVTAMLTAPNKEGRPLFAASEIKDFYLEQCPKIFPQDHFPFSAAKKLVKSLTGPKYDGKYLHQLIHAKLGDTKLSQTLTNVVIPTFDIKHLQPTIFSSYEVKNHPLKDATLADIAISTSAAPTYLPAHFFKVEDLNGNAKEYNLIDGGVAANNPALLAIGEVTNEISGGSSDFFPIRPNDYGRFLVLSLGTGNHKAEEKFNAKEVAGWGLLNWLTHDNSTPIIDAFSQASSDMVDFHLSAVFRALHSEANYIRIQDDTLTGDAASVDIATVENLDILAKTGDELLKKPVARVNLDSGCNENAYETTNEHALIKLAGILSKEKKIRDIRSPHAKAPIRI.

In terms of domain architecture, PNPLA spans 22–228; it reads LSIDGGGIRG…AANNPALLAI (207 aa). The short motif at 26–31 is the GXGXXG element; the sequence is GGGIRG. Positions 64–68 match the GXSXG motif; it reads GTSTG. S66 acts as the Nucleophile in catalysis. D215 (proton acceptor) is an active-site residue. The DGA/G signature appears at 215 to 217; the sequence is DGG. S398 bears the Phosphoserine mark.

The protein belongs to the patatin family. In terms of tissue distribution, expressed specifically in roots.

Its subcellular location is the cytoplasm. In terms of biological role, possesses non-specific lipolytic acyl hydrolase (LAH) activity. Catalyzes the hydrolysis of the galactolipids monogalactosyldiacylglycerol (MGDG) and digalactosyldiacylglycerol (DGDG), and less efficiently the phoshpolipids phosphatidylcholine (PC), phosphatidylethanolamine (PE), phosphatidylglycerol (PG), phosphatidic acid (PA), phosphatidylserine (PS) and phosphatidylinositol (PI). Favors the release of fatty acid at the sn-1 position for PC or PE and the sn-2 position for PG, PA, PS and PI. Negatively affects disease resistance to the necrotic fungal pathogen Botrytis cinerea and the avirulent bacteria Pseudomonas syringae by promoting cell death and reducing the efficiency of the hypersensitive response, respectively. However, PLP2 contributes to resistance to cucumber mosaic virus (CMV), an obligate parasite inducing hypersensitive response. May negatively regulate oxylipin production, possibly via participating in membrane repair that includes removal of oxidatively modified lipids. This is Patatin-like protein 2 (PLP2) from Arabidopsis thaliana (Mouse-ear cress).